The chain runs to 1088 residues: ATP-dependent helicase/deoxyribonuclease subunit B (1088 aa).

The protein belongs to the helicase family. AddB/RexB type 2 subfamily. In terms of assembly, heterodimer of AddA and RexB. Mg(2+) serves as cofactor.

Functionally, the heterodimer acts as both an ATP-dependent DNA helicase and an ATP-dependent, dual-direction single-stranded exonuclease. Recognizes the chi site generating a DNA molecule suitable for the initiation of homologous recombination. This subunit has 5' -&gt; 3' nuclease activity but not helicase activity. This is ATP-dependent helicase/deoxyribonuclease subunit B from Streptococcus suis (strain 98HAH33).